Here is a 64-residue protein sequence, read N- to C-terminus: Large ribosomal subunit protein bL33 (64 aa).

It belongs to the bacterial ribosomal protein bL33 family.

This is Large ribosomal subunit protein bL33 from Picosynechococcus sp. (strain ATCC 27264 / PCC 7002 / PR-6) (Agmenellum quadruplicatum).